The primary structure comprises 254 residues: 3-deoxy-manno-octulosonate cytidylyltransferase (254 aa).

The protein belongs to the KdsB family.

It is found in the cytoplasm. It carries out the reaction 3-deoxy-alpha-D-manno-oct-2-ulosonate + CTP = CMP-3-deoxy-beta-D-manno-octulosonate + diphosphate. Its pathway is nucleotide-sugar biosynthesis; CMP-3-deoxy-D-manno-octulosonate biosynthesis; CMP-3-deoxy-D-manno-octulosonate from 3-deoxy-D-manno-octulosonate and CTP: step 1/1. It functions in the pathway bacterial outer membrane biogenesis; lipopolysaccharide biosynthesis. Functionally, activates KDO (a required 8-carbon sugar) for incorporation into bacterial lipopolysaccharide in Gram-negative bacteria. The protein is 3-deoxy-manno-octulosonate cytidylyltransferase of Haemophilus influenzae (strain PittEE).